We begin with the raw amino-acid sequence, 770 residues long: Protein argonaute (770 aa).

The interval 1–151 (MKAKVVINLV…VIHIIHQIQS (151 aa)) is N-terminal domain. The region spanning 154–272 (TLWELVNKDP…LLPQLVVPTY (119 aa)) is the PAZ domain. Positions 276–361 (QLESDVAKEI…SQLLLWTNYS (86 aa)) are interdomain connector. A mid domain region spans residues 362-544 (RKYPVILPYE…LSKLGVKYYV (183 aa)). Residues 473–756 (GLAFIAARNK…FANAIRNEWK (284 aa)) form the Piwi domain. Active-site residues include D558, E596, D628, and H745. D558 serves as a coordination point for Mn(2+). 3 residues coordinate Mn(2+): D628, H745, and V770.

This sequence belongs to the argonaute family. Long pAgo subfamily. Monomer. Mn(2+) is required as a cofactor.

With respect to regulation, inhibited at greater than 500 mM NaCl. A DNA-guided ssDNA endonuclease that may play a role in defense against invading mobile genetic elements. Uses short 5'-phospho-ssDNA sequences as guides (gDNA) to bind complementary target strands, resulting in cleavage of the target DNA (tDNA). Endonucleolytically cleaves DNA in short dsDNA (the gDNA indicates where to cleave on the tDNA). Efficient guide-dependent target DNA cleavage requires a minimal gDNA length of 15 nucleotides (nt) and works up to at least 31 nt. Overexpression decreases plasmid transformation efficiency. Has no appreciable activity with gRNA or on target RNA. Also has guide-independent activity on plasmid DNA called 'chopping'. The cleavage site is 10 nucleotides (nt) downstream of the target residue base-paired with the 5'-end of the gDNA, cleavage is insensitive to adenine methylation. DNA cleavage produces 5'-phosphomonoesters (as it can be ligated by T4 DNA ligase). The sequence is that of Protein argonaute from Pyrococcus furiosus (strain ATCC 43587 / DSM 3638 / JCM 8422 / Vc1).